Here is a 305-residue protein sequence, read N- to C-terminus: Tetraspanin-12 (305 aa).

Over M1–C12 the chain is Cytoplasmic. S-palmitoyl cysteine attachment occurs at residues C9 and C12. Residues L13 to A33 form a helical membrane-spanning segment. At W34–Y59 the chain is on the extracellular side. The helical transmembrane segment at F60–L80 threads the bilayer. Over G81–N89 the chain is Cytoplasmic. C83 carries S-palmitoyl cysteine lipidation. A helical transmembrane segment spans residues L90–C110. Topologically, residues G111 to R224 are extracellular. The helical transmembrane segment at F225 to L245 threads the bilayer. Residues W246–L305 lie on the Cytoplasmic side of the membrane.

The protein belongs to the tetraspanin (TM4SF) family. In terms of assembly, component of a complex, at least composed of TSPAN12, FZD4 and norrin (NDP). Interacts (when palmitoylated) with ADAM10. Interacts with MMP14/MT1-MMP. In terms of processing, palmitoylated; required for interaction with ADAM10. The precise position of palmitoylated residues is unclear and occurs either on Cys-9, Cys-12 and/or Cys-83.

Its subcellular location is the cell membrane. In terms of biological role, regulator of cell surface receptor signal transduction. Plays a central role in retinal vascularization by regulating norrin (NDP) signal transduction. Acts in concert with norrin (NDP) to promote FZD4 multimerization and subsequent activation of FZD4, leading to promote accumulation of beta-catenin (CTNNB1) and stimulate LEF/TCF-mediated transcriptional programs. Suprisingly, it only activates the norrin (NDP)-dependent activation of FZD4, while it does not activate the Wnt-dependent activation of FZD4, suggesting the existence of a Wnt-independent signaling that also promote accumulation the beta-catenin (CTNNB1). Acts as a regulator of membrane proteinases such as ADAM10 and MMP14/MT1-MMP. Activates ADAM10-dependent cleavage activity of amyloid precursor protein (APP). Activates MMP14/MT1-MMP-dependent cleavage activity. The sequence is that of Tetraspanin-12 (TSPAN12) from Bos taurus (Bovine).